A 198-amino-acid polypeptide reads, in one-letter code: Molybdenum cofactor guanylyltransferase (198 aa).

GTP is bound by residues 14–16, Lys-27, Asp-73, and Asp-103; that span reads LAG. Residue Asp-103 participates in Mg(2+) binding.

This sequence belongs to the MobA family. Monomer. Requires Mg(2+) as cofactor.

It is found in the cytoplasm. The enzyme catalyses Mo-molybdopterin + GTP + H(+) = Mo-molybdopterin guanine dinucleotide + diphosphate. Transfers a GMP moiety from GTP to Mo-molybdopterin (Mo-MPT) cofactor (Moco or molybdenum cofactor) to form Mo-molybdopterin guanine dinucleotide (Mo-MGD) cofactor. This is Molybdenum cofactor guanylyltransferase from Pseudomonas paraeruginosa (strain DSM 24068 / PA7) (Pseudomonas aeruginosa (strain PA7)).